A 257-amino-acid chain; its full sequence is Aspartate/glutamate leucyltransferase (257 aa).

It belongs to the R-transferase family. Bpt subfamily.

The protein localises to the cytoplasm. The enzyme catalyses N-terminal L-glutamyl-[protein] + L-leucyl-tRNA(Leu) = N-terminal L-leucyl-L-glutamyl-[protein] + tRNA(Leu) + H(+). It catalyses the reaction N-terminal L-aspartyl-[protein] + L-leucyl-tRNA(Leu) = N-terminal L-leucyl-L-aspartyl-[protein] + tRNA(Leu) + H(+). Functionally, functions in the N-end rule pathway of protein degradation where it conjugates Leu from its aminoacyl-tRNA to the N-termini of proteins containing an N-terminal aspartate or glutamate. In Nitrobacter hamburgensis (strain DSM 10229 / NCIMB 13809 / X14), this protein is Aspartate/glutamate leucyltransferase.